Consider the following 357-residue polypeptide: Peptide chain release factor 1 (357 aa).

The residue at position 234 (Q234) is an N5-methylglutamine. Over residues 284 to 307 (KKQEQRSNDRKQQVGSGDRSERIR) the composition is skewed to basic and acidic residues. The segment at 284 to 313 (KKQEQRSNDRKQQVGSGDRSERIRTYNFPQ) is disordered.

It belongs to the prokaryotic/mitochondrial release factor family. In terms of processing, methylated by PrmC. Methylation increases the termination efficiency of RF1.

The protein localises to the cytoplasm. Peptide chain release factor 1 directs the termination of translation in response to the peptide chain termination codons UAG and UAA. This Borrelia hermsii (strain HS1 / DAH) protein is Peptide chain release factor 1.